Consider the following 352-residue polypeptide: Invasion chromosome antigen T (352 aa).

It belongs to the IcaT/YfdF family.

Its subcellular location is the secreted. May contribute to pathogenesis, although some of its characteristics suggest it is a fossil gene. The polypeptide is Invasion chromosome antigen T (Shigella flexneri serotype 5a (strain M90T)).